A 122-amino-acid chain; its full sequence is MIKREDRRQLRLVRHKRLRKKIFGTPERPRLAVFRSEKHMYAQIIDDTKGITLVAASTVEKAMKEKLQKTWNITAAKEVGKLIAERALAKGIKEVVFDRGGFKYHGRVKALADAAREAGLKF.

This sequence belongs to the universal ribosomal protein uL18 family. As to quaternary structure, part of the 50S ribosomal subunit; part of the 5S rRNA/L5/L18/L25 subcomplex. Contacts the 5S and 23S rRNAs.

This is one of the proteins that bind and probably mediate the attachment of the 5S RNA into the large ribosomal subunit, where it forms part of the central protuberance. The chain is Large ribosomal subunit protein uL18 from Fervidobacterium nodosum (strain ATCC 35602 / DSM 5306 / Rt17-B1).